We begin with the raw amino-acid sequence, 127 residues long: DNA-directed RNA polymerases I, II, and III subunit RPABC2 (127 aa).

Positions 1-34 (MSDNEDNFDGDDFDDVEEDEGLDDLENAEEEGQE) are enriched in acidic residues. A disordered region spans residues 1 to 53 (MSDNEDNFDGDDFDDVEEDEGLDDLENAEEEGQENVEILPSGERPQANQKRIT). The residue at position 2 (serine 2) is an N-acetylserine. Serine 2 carries the post-translational modification Phosphoserine; by CK2.

Belongs to the archaeal Rpo6/eukaryotic RPB6 RNA polymerase subunit family. Component of the RNA polymerase I (Pol I), RNA polymerase II (Pol II) and RNA polymerase III (Pol III) complexes consisting of at least 13, 12 and 17 subunits, respectively. Pol I complex consists of a ten-subunit catalytic core composed of POLR1A/RPA1, POLR1B/RPA2, POLR1C/RPAC1, POLR1D/RPAC2, POLR1H/RPA12, POLR2E/RPABC1, POLR2F/RPABC2, POLR2H/RPABC3, POLR2K/RPABC4 and POLR2L/RPABC5; a mobile stalk subunit POLR1F/RPA43 protruding from the core and additional subunits homologous to general transcription factors POLR1E/RPA49 and POLR1G/RPA34. Part of Pol I pre-initiation complex (PIC), in which Pol I core assembles with RRN3 and promoter-bound UTBF and SL1/TIF-IB complex. Pol II complex contains a ten-subunit catalytic core composed of POLR2A/RPB1, POLR2B/RPB2, POLR2C/RPB3, POLR2I/RPB9, POLR2J/RPB11, POLR2E/RPABC1, POLR2F/RPABC2, POLR2H/RPABC3, POLR2K/RPABC4 and POLR2L/RPABC5 and a mobile stalk composed of two subunits POLR2D/RPB4 and POLR2G/RPB7. Part of Pol II(G) complex, in which Pol II core associates with an additional subunit POLR2M; unlike conventional Pol II, Pol II(G) functions as a transcriptional repressor. Part of TBP-based Pol II pre-initiation complex (PIC), in which Pol II core assembles with general transcription factors and other specific initiation factors including GTF2E1, GTF2E2, GTF2F1, GTF2F2, TCEA1, ERCC2, ERCC3, GTF2H2, GTF2H3, GTF2H4, GTF2H5, GTF2A1, GTF2A2, GTF2B and TBP; this large multi-subunit PIC complex mediates DNA unwinding and targets Pol II core to the transcription start site where the first phosphodiester bond forms. Pol III complex consists of a ten-subunit catalytic core composed of POLR3A/RPC1, POLR3B/RPC2, POLR1C/RPAC1, POLR1D/RPAC2, POLR3K/RPC10, POLR2E/RPABC1, POLR2F/RPABC2, POLR2H/RPABC3, POLR2K/RPABC4 and POLR2L/RPABC5; a mobile stalk composed of two subunits POLR3H/RPC8 and CRCP/RPC9, protruding from the core and functioning primarily in transcription initiation; and additional subunits homologous to general transcription factors of the RNA polymerase II machinery, POLR3C/RPC3-POLR3F/RPC6-POLR3G/RPC7 heterotrimer required for transcription initiation and POLR3D/RPC4-POLR3E/RPC5 heterodimer involved in both transcription initiation and termination.

The protein localises to the nucleus. It localises to the nucleolus. DNA-dependent RNA polymerase catalyzes the transcription of DNA into RNA using the four ribonucleoside triphosphates as substrates. Common component of RNA polymerases I, II, and III which synthesize ribosomal RNA precursors, mRNA precursors and many functional non-coding RNAs, and small RNAs, such as 5S rRNA and tRNAs, respectively. Pol II is the central component of the basal RNA polymerase II transcription machinery. Pols are composed of mobile elements that move relative to each other. In Pol II, POLR2F/RPABC2 is part of the clamp element and together with parts of POLR2A/RPB1 and POLR2B/RPB2 forms a pocket to which the POLR2D/RPB4-POLR2G/RPB7 subcomplex binds. The protein is DNA-directed RNA polymerases I, II, and III subunit RPABC2 of Homo sapiens (Human).